Reading from the N-terminus, the 154-residue chain is Ribosome maturation factor RimP (154 aa).

This sequence belongs to the RimP family.

It localises to the cytoplasm. Functionally, required for maturation of 30S ribosomal subunits. This Natranaerobius thermophilus (strain ATCC BAA-1301 / DSM 18059 / JW/NM-WN-LF) protein is Ribosome maturation factor RimP.